A 423-amino-acid polypeptide reads, in one-letter code: Keratin, type I cytoskeletal 18 (423 aa).

Ser2 is subject to N-acetylserine. The interval 2-71 is head; sequence SFTTRSTTFS…GLAGMGGVQT (70 aa). Phosphoserine occurs at positions 7, 11, 16, and 19. 2 positions are modified to phosphoserine; alternate: Ser31 and Ser32. Ser31 and Ser32 each carry an O-linked (GlcNAc) serine; alternate glycan. Position 35 is a phosphoserine (Ser35). Position 37 is a phosphotyrosine (Tyr37). Ser43 carries the post-translational modification Phosphoserine. Arg46 is subject to Omega-N-methylarginine. Residue Ser50 is modified to Phosphoserine; alternate. An O-linked (GlcNAc) serine; alternate glycan is attached at Ser50. Ser52 is modified (phosphoserine; by MAPKAPK2 and MAPKAPK3). Ser57 and Ser60 each carry phosphoserine. Residues 62–366 form a necessary for interaction with PNN region; that stretch reads GLAGMGGVQT…EALLNIKVKL (305 aa). Residues 69–121 are interaction with TRADD; that stretch reads VQTEKETMQDLNDRLASYLDKVKNLETENRRLESKIREYLEKRGPQGVRDWGH. Positions 72-107 are coil 1A; that stretch reads EKETMQDLNDRLASYLDKVKNLETENRRLESKIREY. One can recognise an IF rod domain in the interval 72-384; the sequence is EKETMQDLND…RLLEDGDDFS (313 aa). A Glycyl lysine isopeptide (Lys-Gly) (interchain with G-Cter in SUMO2) cross-link involves residue Lys73. Ser85 carries the post-translational modification Phosphoserine. Residues 108–125 form a linker 1 region; sequence LEKRGPQGVRDWGHYFKT. Lys124 bears the N6-acetyllysine mark. Positions 126 to 217 are coil 1B; the sequence is IEDLRAQIFA…KNHEEEVQGL (92 aa). Residues Ser137 and Ser170 each carry the phosphoserine modification. The interval 218–241 is linker 12; that stretch reads EAQIASSGLTVEVDAPKSQDLSKI. The tract at residues 236–384 is interaction with DNAJB6; the sequence is QDLSKIMADI…RLLEDGDDFS (149 aa). A Glycyl lysine isopeptide (Lys-Gly) (interchain with G-Cter in SUMO2) cross-link involves residue Lys240. The tract at residues 242–380 is coil 2; sequence MADIRAQYEQ…ATYRRLLEDG (139 aa). Thr295 is subject to Phosphothreonine. Residues Lys363 and Lys365 each participate in a glycyl lysine isopeptide (Lys-Gly) (interchain with G-Cter in SUMO2) cross-link. Residues 381-423 form a tail region; the sequence is DDFSLNDALDSSNSMQTVQRTTTRKVVDGKVVSETNDTRVLRH. Phosphoserine occurs at positions 384, 391, 392, and 394. Thr397 is modified (phosphothreonine). Lys410 is covalently cross-linked (Glycyl lysine isopeptide (Lys-Gly) (interchain with G-Cter in SUMO2)).

This sequence belongs to the intermediate filament family. In terms of assembly, heterotetramer of two type I and two type II keratins. KRT18 associates with KRT8. Interacts with PNN and mutated CFTR. Interacts with YWHAE, YWHAH and YWHAZ only when phosphorylated. Interacts with DNAJB6, TCHP and TRADD. Interacts with the thrombin-antithrombin complex. Interacts with FAM83H. Interacts with EPPK1. Interacts with PKP1 and PKP2. Phosphorylation increases by IL-6. In terms of processing, proteolytically cleaved by caspases during epithelial cell apoptosis. Cleavage occurs at Asp-231 by either caspase-3, caspase-6 or caspase-7. Post-translationally, dephosphorylated by ethanol. O-GlcNAcylation increases solubility, and decreases stability by inducing proteasomal degradation. Expressed on the plasma membrane of hepatocytes and in the narrow apical portions of supporting cells in the vomeronasal sensory epithelium. Detected in the type III alveolar cells of the lung, in the proliferative crypt epithelium of the small intestine and in the older intragemmal cells of the tongue.

The protein localises to the nucleus matrix. The protein resides in the cytoplasm. It localises to the perinuclear region. Its subcellular location is the nucleus. It is found in the nucleolus. In terms of biological role, when phosphorylated, plays a role in filament reorganization. Involved in the delivery of mutated CFTR to the plasma membrane. Together with KRT8, is involved in interleukin-6 (IL-6)-mediated barrier protection. Involved in the uptake of thrombin-antithrombin complexes by hepatic cells. The chain is Keratin, type I cytoskeletal 18 from Rattus norvegicus (Rat).